The sequence spans 227 residues: MPEINTNHLDKQQVQLLAEMCILIDENDNKIGAETKKNCHLNENIEKGLLHRAFSVFLFNTENKLLLQQRSDAKITFPGCFTNTCCSHPLSNPAELEESDALGVRRAAQRRLKAELGIPLEEVPPEEINYLTRIHYKAQSDGIWGEHEIDYILLVRKNVTLNPDPNEIKSYCYVSKEELKELLKKAASGEIKITPWFKIIAATFLFKWWDNLNHLNQFVDHEKIYRM.

Residue K36 coordinates substrate. The Mg(2+) site is built by H40 and H51. Residues 49–199 (LLHRAFSVFL…EIKITPWFKI (151 aa)) form the Nudix hydrolase domain. Substrate contacts are provided by R70 and K74. The active site involves C86. S87 lines the substrate pocket. Residues E146 and E148 each coordinate Mg(2+). E148 is an active-site residue. K176 carries the N6-acetyllysine modification. The Microbody targeting signal motif lies at 225-227 (YRM).

Belongs to the IPP isomerase type 1 family. As to quaternary structure, monomer. Mg(2+) is required as a cofactor.

Its subcellular location is the peroxisome. It carries out the reaction isopentenyl diphosphate = dimethylallyl diphosphate. It participates in isoprenoid biosynthesis; dimethylallyl diphosphate biosynthesis; dimethylallyl diphosphate from isopentenyl diphosphate: step 1/1. In terms of biological role, catalyzes the 1,3-allylic rearrangement of the homoallylic substrate isopentenyl (IPP) to its highly electrophilic allylic isomer, dimethylallyl diphosphate (DMAPP). The chain is Isopentenyl-diphosphate Delta-isomerase 1 (IDI1) from Homo sapiens (Human).